The sequence spans 91 residues: MAKRTKKVGIVGKYGTRYGASLRKMVKKMEITQHSRYTCPFCGKDAMRRGAVGIWNCSKCKKTVAGGAYVYGTVAAATVRSTVRRLRDLKE.

The C4-type zinc-finger motif lies at 39 to 60 (CPFCGKDAMRRGAVGIWNCSKC).

This sequence belongs to the eukaryotic ribosomal protein eL43 family.

This chain is Large ribosomal subunit protein eL43 (rpl-37a), found in Ostertagia ostertagi (Brown stomach worm).